Here is a 620-residue protein sequence, read N- to C-terminus: Mitochondrial Rho GTPase 2 (620 aa).

Over 1–594 the chain is Cytoplasmic; that stretch reads MRRDVRILLL…ELHPTSFWLR (594 aa). In terms of domain architecture, Miro 1 spans 2–168; sequence RRDVRILLLG…FYYAQKAVLH (167 aa). Residues G16, K17, T18, and S19 each contribute to the GTP site. T18 serves as a coordination point for Mg(2+). D57 serves as a coordination point for Mg(2+). S59 provides a ligand contact to GTP. A Glycyl lysine isopeptide (Lys-Gly) (interchain with G-Cter in ubiquitin) cross-link involves residue K96. GTP contacts are provided by N118, K119, D121, A149, and K150. K119 is covalently cross-linked (Glycyl lysine isopeptide (Lys-Gly) (interchain with G-Cter in ubiquitin)). K164 is covalently cross-linked (Glycyl lysine isopeptide (Lys-Gly) (interchain with G-Cter in ubiquitin)). 2 EF-hand domains span residues 184–219 and 304–339; these read ACAQALTRIFRLSDQDRDHGLSDEELNAFQKSCFGH and RGYQFVQRMFEKHDQDHDGVLSPTELQNLFSVFSGA. Ca(2+) contacts are provided by D197, D199, D201, E208, D317, D319, D321, and E328. Residues 415–578 form the Miro 2 domain; that stretch reads RSVLMCKVLG…FTQLATMATF (164 aa). Positions 427, 429, 430, 431, and 432 each coordinate GTP. S431 provides a ligand contact to Mg(2+). E473 provides a ligand contact to Mg(2+). Positions 527, 529, and 558 each coordinate GTP. The chain crosses the membrane as a helical; Anchor for type IV membrane protein span at residues 595–617; that stretch reads GVLVAVGTAVAAVLSFSLYRVLV. At 618-620 the chain is on the mitochondrial intermembrane side; that stretch reads KSR.

The protein belongs to the mitochondrial Rho GTPase family. As to quaternary structure, homodimer. Interacts with the kinesin-binding proteins TRAK1/OIP106 and TRAK2/GRIF1, forming a link between mitochondria and the trafficking apparatus of the microtubules. Interacts with ARMCX3. Found in a complex with KIF5B, OGT, RHOT1 and TRAK1. Ubiquitinated by PRKN in a PINK1-dependent manner, leading to its degradation. In terms of tissue distribution, ubiquitously expressed.

The protein resides in the mitochondrion outer membrane. The enzyme catalyses GTP + H2O = GDP + phosphate + H(+). It carries out the reaction ATP + H2O = ADP + phosphate + H(+). It catalyses the reaction UTP + H2O = UDP + phosphate + H(+). Its function is as follows. Atypical mitochondrial nucleoside-triphosphatase (NTPase) involved in mitochondrial trafficking. Probably involved in control of anterograde transport of mitochondria and their subcellular distribution. Can hydrolyze GTP, ATP and UTP. The protein is Mitochondrial Rho GTPase 2 (Rhot2) of Mus musculus (Mouse).